The primary structure comprises 719 residues: Serine/threonine-protein kinase PAK 5 (719 aa).

5 disordered regions span residues 1–28 (MFGK…FDPQ), 96–118 (RSNS…RIQG), 226–245 (SPLD…TSRC), 253–298 (SESD…PMMP), and 339–372 (VFSP…GSHQ). A CRIB domain is found at 11 to 24 (ISGPSNFEHRVHTG). The segment at 25–448 (FDPQEQKFTG…VVSPGDPREY (424 aa)) is linker. Ser104 carries the post-translational modification Phosphoserine. Thr107 is subject to Phosphothreonine. Residues 226–244 (SPLDYSFQLTPSRTAGTSR) are compositionally biased toward polar residues. Residues 357 to 372 (LPQSQSKAGYSSGSHQ) are compositionally biased toward polar residues. The Protein kinase domain maps to 449–700 (LDNFIKIGEG…AQELLGHPFL (252 aa)). ATP contacts are provided by residues 455–463 (IGEGSTGIV) and Lys478. Catalysis depends on Asp568, which acts as the Proton acceptor.

It belongs to the protein kinase superfamily. STE Ser/Thr protein kinase family. STE20 subfamily. As to quaternary structure, interacts tightly with GTP-bound but not GDP-bound CDC42/p21 and RAC1. Interacts with MARK2, leading to inhibit MARK2 independently of kinase activity. Interacts with RHOD and RHOH. In terms of processing, autophosphorylated when activated by CDC42/p21. Highly expressed in brain and eye. Also expressed in adrenal gland, pancreas, prostate and testes. Within the brain, expression is restricted to neurons. Present in brain but not in kidney, lung and spleen (at protein level).

The protein localises to the mitochondrion. It is found in the cytoplasm. The protein resides in the nucleus. The enzyme catalyses L-seryl-[protein] + ATP = O-phospho-L-seryl-[protein] + ADP + H(+). It catalyses the reaction L-threonyl-[protein] + ATP = O-phospho-L-threonyl-[protein] + ADP + H(+). In terms of biological role, serine/threonine protein kinase that plays a role in a variety of different signaling pathways including cytoskeleton regulation, cell migration, proliferation or cell survival. Activation by various effectors including growth factor receptors or active CDC42 and RAC1 results in a conformational change and a subsequent autophosphorylation on several serine and/or threonine residues. Phosphorylates the proto-oncogene RAF1 and stimulates its kinase activity. Promotes cell survival by phosphorylating the BCL2 antagonist of cell death BAD. Phosphorylates CTNND1, probably to regulate cytoskeletal organization and cell morphology. Keeps microtubules stable through MARK2 inhibition and destabilizes the F-actin network leading to the disappearance of stress fibers and focal adhesions. The sequence is that of Serine/threonine-protein kinase PAK 5 from Mus musculus (Mouse).